Here is a 256-residue protein sequence, read N- to C-terminus: Floral homeotic protein APETALA 1 (256 aa).

The MADS-box domain occupies 1–61; that stretch reads MGRGRVQLKR…GKLFEYSTDP (61 aa). The region spanning 88-178 is the K-box domain; that stretch reads NTNWSMEYNR…SKQIKERENV (91 aa). The interval 187-206 is disordered; the sequence is DEQNHGHNMPPPPPPQQHQI.

In terms of assembly, homodimer capable of binding to CArG-box sequences.

It is found in the nucleus. Its function is as follows. Transcription factor that promotes early floral meristem identity in synergy with LEAFY. Displays a redundant function with CAULIFLOWER in the up-regulation of LEAFY. Required subsequently for the transition of an inflorescence meristem into a floral meristem, and for the normal development of sepals and petals in flowers. Regulates positively B class homeotic proteins. In Brassica oleracea (Wild cabbage), this protein is Floral homeotic protein APETALA 1 (AP1).